We begin with the raw amino-acid sequence, 212 residues long: Large ribosomal subunit protein bL25 (212 aa).

Belongs to the bacterial ribosomal protein bL25 family. CTC subfamily. As to quaternary structure, part of the 50S ribosomal subunit; part of the 5S rRNA/L5/L18/L25 subcomplex. Contacts the 5S rRNA. Binds to the 5S rRNA independently of L5 and L18.

This is one of the proteins that binds to the 5S RNA in the ribosome where it forms part of the central protuberance. The protein is Large ribosomal subunit protein bL25 of Leptospira interrogans serogroup Icterohaemorrhagiae serovar copenhageni (strain Fiocruz L1-130).